Consider the following 674-residue polypeptide: MSTQIKREKPIKKQFQKKKFADLAVQGTNNSSIASKRSVELTYLPKLGVGSNAEKLQPGKPYFRYFVPKKIKRSPCINRGYWLRLHAVRSHIESILDSCQENITIINLGCGYDPLPFEMLDPQNPQYSRYSNRLNFIDIDYPDLLNIKSGVIKETPELLSIIGGIDPTETNMIISERYKTIPCDLYDMPAFEALLKSENLGHPNTIKIFIAEVSLAYMKHEKADDIIASCSKFPNSHFIMLEQIIPVGEYEPFSGRMLKHFSKNESPLQTVTKYQTIESQIERFRRYNFTNVNAGDMFQLWNSLSSNVHSKIENIEPFDELEEFHLFCHHYMICHATNNEQFKFNESIKFREPEVLPSLPISGLRIDSIDKIGFSKRFGSSVISKDSIIYTGGASPYRSDEADVINLEECTIETLSNMKLPDARVCHSYDSLMDGKLDILIGGRKAPHQPFNDVFIFEKQTASWEKVATLDYPIYRHATSSLSNDKLLLFGGNFCLKEPFLTITVKSETQIVVRSINCPDSIKSSIGAAMCYNEASNDVIILGGSSNGTEVSDKLIIMSYDDKSETLTVKKEVTNDLFKRYGSKIIHLTDDEYLVVGGTSPDRLFDASNSIITYNSRSDEIKSVRIPDHIWQGDELMLVGFELQKLNGKIIIFGGGATCYGFGSVNNSIYSIEK.

S-adenosyl-L-methionine-binding positions include R84, G109, D140, 184 to 185 (DL), and E212.

It belongs to the methyltransferase superfamily. LCMT family.

The catalysed reaction is 7-[(3S)-3-amino-3-carboxypropyl]wyosine(37) in tRNA(Phe) + S-adenosyl-L-methionine = 7-[(3S)-(3-amino-3-methoxycarbonyl)propyl]wyosine(37) in tRNA(Phe) + S-adenosyl-L-homocysteine. It catalyses the reaction 7-[(3S)-(3-amino-3-methoxycarbonyl)propyl]wyosine(37) in tRNA(Phe) + S-adenosyl-L-methionine + CO2 = wybutosine(37) in tRNA(Phe) + S-adenosyl-L-homocysteine + 2 H(+). It functions in the pathway tRNA modification; wybutosine-tRNA(Phe) biosynthesis. Functionally, probable S-adenosyl-L-methionine-dependent methyltransferase that acts as a component of the wybutosine biosynthesis pathway. Wybutosine is a hyper modified guanosine with a tricyclic base found at the 3'-position adjacent to the anticodon of eukaryotic phenylalanine tRNA. May methylate the carboxyl group of leucine residues to form alpha-leucine ester residues. This is tRNA wybutosine-synthesizing protein 4 (PPM2) from Candida glabrata (strain ATCC 2001 / BCRC 20586 / JCM 3761 / NBRC 0622 / NRRL Y-65 / CBS 138) (Yeast).